The following is a 228-amino-acid chain: 2,3-bisphosphoglycerate-dependent phosphoglycerate mutase (228 aa).

Residues 8 to 15 (RHGQSEWN), 21 to 22 (TG), arginine 60, 87 to 90 (ERHY), lysine 98, 114 to 115 (RR), and 183 to 184 (GN) contribute to the substrate site. Residue histidine 9 is the Tele-phosphohistidine intermediate of the active site. Glutamate 87 acts as the Proton donor/acceptor in catalysis.

Belongs to the phosphoglycerate mutase family. BPG-dependent PGAM subfamily.

The enzyme catalyses (2R)-2-phosphoglycerate = (2R)-3-phosphoglycerate. The protein operates within carbohydrate degradation; glycolysis; pyruvate from D-glyceraldehyde 3-phosphate: step 3/5. In terms of biological role, catalyzes the interconversion of 2-phosphoglycerate and 3-phosphoglycerate. This is 2,3-bisphosphoglycerate-dependent phosphoglycerate mutase from Staphylococcus epidermidis (strain ATCC 35984 / DSM 28319 / BCRC 17069 / CCUG 31568 / BM 3577 / RP62A).